The following is a 544-amino-acid chain: MAKRIIYNEQARRALERGIDILAESVAVTLGPKGRNVVLEKKFGAPQIINDGVTIAKEIELEDHIENTGVALIRQAASKTNDAAGDGTTTATVLAHAMVKAGLRNVAAGANAISLKKGIDKASDFLVSKIEELAKPISDSNAIAQCGTIAAGNDEEVGQMIADAMDKVGKEGVISLEEGKSMTTELEVTEGMRFDKGYISPYFATDTERMEAVLDEPYILLTDKKIGLVQDLVPVLEQIARTGKPLLIIAEDIEKEALATLVVNRLRGVLNVAAVKAPGFGDRRKAMLEDMAVLTNGQLITEDAGLKLDNAKLEMLGTARRVTINKDTTTIVAEGNETAVKGRCEQIKKQMDETDSTYDKEKLQERLAKLAGGVAVVKVGAATETEMKDKKLRLEDAINATKAAVEEGIVPGGGTTLTHLASDLQKWANSNLSGEELIGSNIVEASLAAPLMRIAENAGANGAVVAENVKSRPISDGYNAATGDYIDMLAAGIVDPAKVTRSGLQNAASIAGMVLTTECIVADLPEKKEAAPAGGGGMGGDFDY.

ATP contacts are provided by residues 29-32 (TLGP), 86-90 (DGTTT), glycine 413, 479-481 (NAA), and aspartate 495.

It belongs to the chaperonin (HSP60) family. As to quaternary structure, forms a cylinder of 14 subunits composed of two heptameric rings stacked back-to-back. Interacts with the co-chaperonin GroES.

Its subcellular location is the cytoplasm. It catalyses the reaction ATP + H2O + a folded polypeptide = ADP + phosphate + an unfolded polypeptide.. Functionally, together with its co-chaperonin GroES, plays an essential role in assisting protein folding. The GroEL-GroES system forms a nano-cage that allows encapsulation of the non-native substrate proteins and provides a physical environment optimized to promote and accelerate protein folding. This chain is Chaperonin GroEL 2, found in Prochlorococcus marinus (strain MIT 9313).